The sequence spans 71 residues: Plasticin-DA1 (71 aa).

Residues 1–22 (MAFLKKSLFLVLFLALVPLSIC) form the signal peptide. A propeptide spanning residues 23 to 42 (EAEKREEENEEKQEDDDESE) is cleaved from the precursor. Residues 25–45 (EKREEENEEKQEDDDESEKKR) form a disordered region. Residues 30–40 (ENEEKQEDDDE) are compositionally biased toward acidic residues. Residue G68 is modified to Glycine amide. The propeptide occupies 70-71 (ER).

It belongs to the frog skin active peptide (FSAP) family. Plasticin subfamily. Expressed by the skin glands.

The protein localises to the secreted. The protein resides in the target cell membrane. In terms of biological role, neutral peptide with no antimicrobial activity. Does not permeate bacterial membranes. May act in synergy with cationic peptides by enhancing their activity. Has a moderate hemolytic activity. It interacts with zwitterionic phospholipids (DMPC) without perturbing either the interface or inside of the bilayer, whereas it causes little perturbations at the interface peptide-anionic vesicles (DMPG) as well as in the bilayer alkyl chains. The sequence is that of Plasticin-DA1 from Agalychnis dacnicolor (Giant Mexican leaf frog).